The sequence spans 179 residues: Cytochrome b6-f complex iron-sulfur subunit (179 aa).

A helical membrane pass occupies residues Leu-21–Ile-43. The Rieske domain occupies Gly-61–Phe-162. Positions 108, 110, 126, and 129 each coordinate [2Fe-2S] cluster. The cysteines at positions 113 and 128 are disulfide-linked.

The protein belongs to the Rieske iron-sulfur protein family. In terms of assembly, the 4 large subunits of the cytochrome b6-f complex are cytochrome b6, subunit IV (17 kDa polypeptide, PetD), cytochrome f and the Rieske protein, while the 4 small subunits are PetG, PetL, PetM and PetN. The complex functions as a dimer. It depends on [2Fe-2S] cluster as a cofactor.

The protein resides in the cellular thylakoid membrane. The enzyme catalyses 2 oxidized [plastocyanin] + a plastoquinol + 2 H(+)(in) = 2 reduced [plastocyanin] + a plastoquinone + 4 H(+)(out). Its function is as follows. Component of the cytochrome b6-f complex, which mediates electron transfer between photosystem II (PSII) and photosystem I (PSI), cyclic electron flow around PSI, and state transitions. This is Cytochrome b6-f complex iron-sulfur subunit from Cyanothece sp. (strain PCC 7425 / ATCC 29141).